A 160-amino-acid polypeptide reads, in one-letter code: uncharacterized protein (160 aa).

Belongs to the Dps family.

This is an uncharacterized protein from Haemophilus influenzae (strain ATCC 51907 / DSM 11121 / KW20 / Rd).